The chain runs to 241 residues: MISVRRGFSQLWYWGKRGVIGIIALWMAGILIFAFLPVPFSMVMIERQLGAWLTGDFAYVAHSDWVPMDEISPYMALAVMAAEDQKFPDHWGFDVGAIESALSHNQRNQKRIRGASTLSQQTAKNVFLWDGRSWVRKGLEVGLTAGIELIWTKRRILTVYLNIAEFGNGIFGVEAAARHFFNKPASKLSASEAALLAAVLPNPLRFKVNAPSGYVISRQQWILRQMHQLGGKTFLQENTLD.

A helical transmembrane segment spans residues 18–38 (GVIGIIALWMAGILIFAFLPV).

The protein belongs to the glycosyltransferase 51 family.

Its subcellular location is the cell inner membrane. It catalyses the reaction [GlcNAc-(1-&gt;4)-Mur2Ac(oyl-L-Ala-gamma-D-Glu-L-Lys-D-Ala-D-Ala)](n)-di-trans,octa-cis-undecaprenyl diphosphate + beta-D-GlcNAc-(1-&gt;4)-Mur2Ac(oyl-L-Ala-gamma-D-Glu-L-Lys-D-Ala-D-Ala)-di-trans,octa-cis-undecaprenyl diphosphate = [GlcNAc-(1-&gt;4)-Mur2Ac(oyl-L-Ala-gamma-D-Glu-L-Lys-D-Ala-D-Ala)](n+1)-di-trans,octa-cis-undecaprenyl diphosphate + di-trans,octa-cis-undecaprenyl diphosphate + H(+). The protein operates within cell wall biogenesis; peptidoglycan biosynthesis. Its function is as follows. Peptidoglycan polymerase that catalyzes glycan chain elongation from lipid-linked precursors. The sequence is that of Biosynthetic peptidoglycan transglycosylase from Yersinia pestis bv. Antiqua (strain Antiqua).